A 492-amino-acid polypeptide reads, in one-letter code: GDP-fucose protein O-fucosyltransferase 4 (492 aa).

The Cytoplasmic segment spans residues 1 to 7 (MAAGPIR). The helical; Signal-anchor for type II membrane protein transmembrane segment at 8–24 (VVLVLLGVLSVCAASGH) threads the bilayer. The Lumenal portion of the chain corresponds to 25-492 (GSVAEREAGG…HEIFMKRQHL (468 aa)). Residue N166 is glycosylated (N-linked (GlcNAc...) asparagine). C389 and C392 are oxidised to a cystine. N-linked (GlcNAc...) asparagine glycosylation occurs at N443.

It belongs to the glycosyltransferase 10 family.

The protein localises to the endoplasmic reticulum membrane. It carries out the reaction L-threonyl-[protein] + GDP-beta-L-fucose = 3-O-(alpha-L-fucosyl)-L-threonyl-[protein] + GDP + H(+). The enzyme catalyses L-seryl-[protein] + GDP-beta-L-fucose = 3-O-(alpha-L-fucosyl)-L-seryl-[protein] + GDP + H(+). The protein operates within protein modification; protein glycosylation. Its function is as follows. Protein O-fucosyltransferase that specifically catalyzes O-fucosylation of serine or threonine residues in EMI domains of target proteins, such as MMRN1, MMRN2 and EMID1. Attaches fucose through an O-glycosidic linkage. O-fucosylation of EMI domain-containing proteins may be required for facilitating protein folding and secretion. Also shows minor alpha-(1,3)-fucosyltransferase activity toward activity toward biantennary N-glycan acceptors. However, this was tested with a library of synthetic substrates and this activity is unsure in vivo. This chain is GDP-fucose protein O-fucosyltransferase 4, found in Homo sapiens (Human).